The following is a 310-amino-acid chain: ADP-L-glycero-D-manno-heptose-6-epimerase (310 aa).

NADP(+)-binding positions include 10 to 11 (FI), 31 to 32 (DN), lysine 38, lysine 53, 75 to 79 (EGACS), and asparagine 92. Tyrosine 140 functions as the Proton acceptor in the catalytic mechanism. Position 144 (lysine 144) interacts with NADP(+). Asparagine 169 contacts substrate. 2 residues coordinate NADP(+): valine 170 and lysine 178. Lysine 178 functions as the Proton acceptor in the catalytic mechanism. Substrate contacts are provided by residues serine 180, histidine 187, 201 to 204 (FAGS), arginine 209, and tyrosine 272.

This sequence belongs to the NAD(P)-dependent epimerase/dehydratase family. HldD subfamily. As to quaternary structure, homopentamer. The cofactor is NADP(+).

It catalyses the reaction ADP-D-glycero-beta-D-manno-heptose = ADP-L-glycero-beta-D-manno-heptose. It functions in the pathway nucleotide-sugar biosynthesis; ADP-L-glycero-beta-D-manno-heptose biosynthesis; ADP-L-glycero-beta-D-manno-heptose from D-glycero-beta-D-manno-heptose 7-phosphate: step 4/4. In terms of biological role, catalyzes the interconversion between ADP-D-glycero-beta-D-manno-heptose and ADP-L-glycero-beta-D-manno-heptose via an epimerization at carbon 6 of the heptose. The sequence is that of ADP-L-glycero-D-manno-heptose-6-epimerase from Yersinia pseudotuberculosis serotype O:1b (strain IP 31758).